Consider the following 226-residue polypeptide: Large ribosomal subunit protein uL4 (226 aa).

Residues 47–74 are disordered; it reads GTAKAKTRSEVSGGGRKPWPQKHTGRAR.

Belongs to the universal ribosomal protein uL4 family. As to quaternary structure, part of the 50S ribosomal subunit.

In terms of biological role, one of the primary rRNA binding proteins, this protein initially binds near the 5'-end of the 23S rRNA. It is important during the early stages of 50S assembly. It makes multiple contacts with different domains of the 23S rRNA in the assembled 50S subunit and ribosome. Forms part of the polypeptide exit tunnel. The protein is Large ribosomal subunit protein uL4 of Kosmotoga olearia (strain ATCC BAA-1733 / DSM 21960 / TBF 19.5.1).